A 303-amino-acid chain; its full sequence is Zinc transporter ZIP9 (303 aa).

A helical membrane pass occupies residues 7 to 27 (ISLLSLAMLVGCYVSGIIPLA). Asn29 carries N-linked (GlcNAc...) asparagine glycosylation. 5 helical membrane passes run 35–55 (LKLV…AVIV), 102–122 (AYIG…DQIG), 142–162 (ITTT…LGAA), 172–192 (LIVF…LVSF), and 206–226 (HLLV…LGLS). The N-linked (GlcNAc...) asparagine glycan is linked to Asn237. The next 2 helical transmembrane spans lie at 240–260 (GVAM…HVLP) and 282–302 (LEVC…IGHQ).

It belongs to the ZIP transporter (TC 2.A.5) family.

It is found in the golgi apparatus. The protein resides in the trans-Golgi network membrane. The protein localises to the cell membrane. Its subcellular location is the cytoplasm. It localises to the perinuclear region. It is found in the mitochondrion. The protein resides in the nucleus. The catalysed reaction is Zn(2+)(in) = Zn(2+)(out). Its function is as follows. Transports zinc ions across cell and organelle membranes into the cytoplasm and regulates intracellular zinc homeostasis. Participates in the zinc ions efflux out of the secretory compartments. Also functions as a membrane androgen receptor that mediates, through a G protein, the non-classical androgen signaling pathway, characterized by the activation of MAPK3/MAPK1 (Erk1/2) and transcription factors CREB1 or ATF1. Moreover, has dual functions as a membrane-bound androgen receptor and as an androgen-dependent zinc transporter both of which are mediated through an inhibitory G protein (Gi) that mediates both MAP kinase and zinc signaling leading to the androgen-dependent apoptotic process. This chain is Zinc transporter ZIP9, found in Xenopus tropicalis (Western clawed frog).